A 501-amino-acid polypeptide reads, in one-letter code: Ribose import ATP-binding protein RbsA (501 aa).

ABC transporter domains follow at residues 8–245 (LKMV…VGRT) and 255–500 (VKKG…VGIN). ATP is bound at residue 40–47 (GENGAGKS).

This sequence belongs to the ABC transporter superfamily. Ribose importer (TC 3.A.1.2.1) family. As to quaternary structure, the complex is composed of an ATP-binding protein (RbsA), two transmembrane proteins (RbsC) and a solute-binding protein (RbsB).

It is found in the cell membrane. The enzyme catalyses D-ribose(out) + ATP + H2O = D-ribose(in) + ADP + phosphate + H(+). Functionally, part of the ABC transporter complex RbsABC involved in ribose import. Responsible for energy coupling to the transport system. The chain is Ribose import ATP-binding protein RbsA from Clostridium perfringens (strain SM101 / Type A).